Reading from the N-terminus, the 940-residue chain is Mitogen-activated protein kinase kinase kinase 10 (940 aa).

The SH3 domain maps to 16-81 (PAGPVWTAVF…PSNYVAPAAP (66 aa)). The Protein kinase domain occupies 98-360 (LQLEEIIGVG…GSILKQLEVI (263 aa)). ATP is bound by residues 104-112 (IGVGGFGKV) and Lys-125. Asp-222 serves as the catalytic Proton acceptor. A Phosphothreonine; by autocatalysis modification is found at Thr-258. Ser-262 is subject to Phosphoserine; by autocatalysis and MAP4K1. Leucine-zipper regions lie at residues 384 to 405 (IQHM…EEEL) and 419 to 440 (LRRR…ELHL). 3 disordered regions span residues 490 to 599 (PTLD…MAPG), 687 to 734 (RAGD…GLAP), and 749 to 917 (STRS…QPTL). A phosphoserine mark is found at Ser-498, Ser-502, and Ser-506. Positions 501–511 (ASPPASPSIIP) are enriched in low complexity. The residue at position 552 (Thr-552) is a Phosphothreonine. 2 stretches are compositionally biased toward basic and acidic residues: residues 560–572 (QKER…RLKA) and 687–698 (RAGDGEEQRRWL). Residues 765 to 775 (APSPPPSPLAP) show a composition bias toward pro residues. The segment covering 822–840 (LRQREPLELTNHGPRDPLD) has biased composition (basic and acidic residues). Arg-843 is subject to Omega-N-methylarginine. Positions 899–913 (PSRPDTPESPGPPSV) are enriched in pro residues.

It belongs to the protein kinase superfamily. STE Ser/Thr protein kinase family. MAP kinase kinase kinase subfamily. In terms of assembly, homodimer. Interacts with SH3RF2. The cofactor is Mg(2+). Post-translationally, autophosphorylation on serine and threonine residues within the activation loop plays a role in enzyme activation.

The enzyme catalyses L-seryl-[protein] + ATP = O-phospho-L-seryl-[protein] + ADP + H(+). The catalysed reaction is L-threonyl-[protein] + ATP = O-phospho-L-threonyl-[protein] + ADP + H(+). Its activity is regulated as follows. Homodimerization via the leucine zipper domains is required for autophosphorylation and subsequent activation. Functionally, activates the JUN N-terminal pathway. This is Mitogen-activated protein kinase kinase kinase 10 (Map3k10) from Mus musculus (Mouse).